The primary structure comprises 302 residues: Beta-1,2-mannobiose phosphorylase (302 aa).

Belongs to the glycosyl hydrolase 130 family. As to quaternary structure, monomer.

The enzyme catalyses beta-D-mannopyranosyl-(1-&gt;2)-D-mannopyranose + phosphate = alpha-D-mannose 1-phosphate + D-mannose. It functions in the pathway nucleotide-sugar biosynthesis; GDP-alpha-D-mannose biosynthesis. Its function is as follows. Probably involved in a salvage pathway for GDP-D-mannose biosynthesis. Catalyzes the reversible phosphorolysis of 1,2-beta-oligomannan. In phosphorolytic reactions, prefers beta-1,2-mannobiose (beta-1,2-Man2) as substrate. Produces alpha-D-mannose 1-phosphate, which is the precursor of GDP-D-mannose. The sequence is that of Beta-1,2-mannobiose phosphorylase from Thermoanaerobacter sp. (strain X514).